The following is an 81-amino-acid chain: Photosystem I iron-sulfur center (81 aa).

2 consecutive 4Fe-4S ferredoxin-type domains span residues 2–31 and 39–68; these read AHSVKIYATCIGCTQCVRACPTDVLEMVPW and IASAPRTEDCVGCKRCESACPTDFLSVRVY. [4Fe-4S] cluster contacts are provided by C11, C14, C17, C21, C48, C51, C54, and C58.

As to quaternary structure, the eukaryotic PSI reaction center is composed of at least 11 subunits. Requires [4Fe-4S] cluster as cofactor.

The protein localises to the plastid. It is found in the chloroplast thylakoid membrane. The enzyme catalyses reduced [plastocyanin] + hnu + oxidized [2Fe-2S]-[ferredoxin] = oxidized [plastocyanin] + reduced [2Fe-2S]-[ferredoxin]. Its function is as follows. Apoprotein for the two 4Fe-4S centers FA and FB of photosystem I (PSI); essential for photochemical activity. FB is the terminal electron acceptor of PSI, donating electrons to ferredoxin. The C-terminus interacts with PsaA/B/D and helps assemble the protein into the PSI complex. Required for binding of PsaD and PsaE to PSI. PSI is a plastocyanin-ferredoxin oxidoreductase, converting photonic excitation into a charge separation, which transfers an electron from the donor P700 chlorophyll pair to the spectroscopically characterized acceptors A0, A1, FX, FA and FB in turn. This is Photosystem I iron-sulfur center from Mesostigma viride (Green alga).